We begin with the raw amino-acid sequence, 148 residues long: Large ribosomal subunit protein uL15 (148 aa).

A compositionally biased stretch (basic residues) spans 1 to 30 (MPSRLRKTRKLRGHVSHGHGRIGKHRKHPG). The segment at 1-38 (MPSRLRKTRKLRGHVSHGHGRIGKHRKHPGGRGNAGGL) is disordered. Residue H39 is modified to (3S)-3-hydroxyhistidine. An N6-acetyllysine mark is found at K47 and K55. The residue at position 68 (S68) is a Phosphoserine. N6-acetyllysine is present on K110.

It belongs to the universal ribosomal protein uL15 family. Hydroxylated on His-39 by MINA.

The sequence is that of Large ribosomal subunit protein uL15 (RPL27A) from Pan troglodytes (Chimpanzee).